Reading from the N-terminus, the 132-residue chain is Small ribosomal subunit protein uS19 (132 aa).

Belongs to the universal ribosomal protein uS19 family. Part of the 30S ribosomal subunit.

Functionally, protein S19 forms a complex with S13 that binds strongly to the 16S ribosomal RNA. This Pyrococcus furiosus (strain ATCC 43587 / DSM 3638 / JCM 8422 / Vc1) protein is Small ribosomal subunit protein uS19.